Consider the following 153-residue polypeptide: UPF0768 protein PB2B2.18 (153 aa).

The protein belongs to the UPF0768 family.

This Schizosaccharomyces pombe (strain 972 / ATCC 24843) (Fission yeast) protein is UPF0768 protein PB2B2.18.